Reading from the N-terminus, the 73-residue chain is Large ribosomal subunit protein uL29 (73 aa).

The protein belongs to the universal ribosomal protein uL29 family.

This is Large ribosomal subunit protein uL29 (rpmC) from Aquifex aeolicus (strain VF5).